Reading from the N-terminus, the 227-residue chain is uncharacterized protein (227 aa).

7 helical membrane passes run 25–45 (LLGF…NAGF), 49–69 (AAFG…YGMI), 80–100 (TGVT…GPVL), 111–131 (KIVG…SALA), 144–164 (FLTV…FLGI), 165–185 (PALA…MIMW), and 201–221 (AALT…NILL).

It localises to the cell membrane. This is an uncharacterized protein from Neisseria meningitidis serogroup B (strain ATCC BAA-335 / MC58).